Consider the following 477-residue polypeptide: Adenylyl cyclase-associated protein 2 (477 aa).

Position 2 is an N-acetylalanine (A2). 2 disordered regions span residues 224–261 (VLSS…PSRS) and 274–323 (TKGL…KHAP). Over residues 230–246 (GLPPPPPPPPPPGPPPL) the composition is skewed to pro residues. Phosphoserine is present on residues S301 and S309. Residues 301–320 (SPTKSHTPSPTSPKSYPSQK) show a composition bias toward low complexity. The C-CAP/cofactor C-like domain occupies 317–455 (PSQKHAPVLE…QDGDYREFPI (139 aa)).

This sequence belongs to the CAP family.

It is found in the cell membrane. Functionally, involved in the regulation of actin polymerization. The polypeptide is Adenylyl cyclase-associated protein 2 (CAP2) (Pongo abelii (Sumatran orangutan)).